The primary structure comprises 682 residues: Pneumocandin biosynthesis cluster protein B (682 aa).

A compositionally biased stretch (low complexity) spans 63–73 (SSLSSTEVTSS). Disordered stretches follow at residues 63-86 (SSLSSTEVTSSPNASPLYNTDAPE), 107-129 (QNTPSITGGTASAEYQNSGDTNQ), and 251-358 (SEST…SPAN). 2 stretches are compositionally biased toward polar residues: residues 257–279 (NTGSANSLNSGLLANTPSSSHSS) and 310–320 (PRQTTEATPCD). Residues 335 to 349 (PERRSMKMVRKEARD) show a composition bias toward basic and acidic residues.

Its function is as follows. Part of the gene cluster that mediates the biosynthesis of pneumocandins, lipohexapeptides of the echinocandin family that prevent fungal cell wall formation by non-competitive inhibition of beta-1,3-glucan synthase. The 10,12-dimethylmyristoyl side chain is synthesized by the reducing polyketide synthase gloL/GLPKS4. The thioesterase gloN/GLHYD exclusively interacts with gloL/GLPKS4 to maintain turnover of the polyketide side chain. The 10R,12S-dimethylmyristic acid is then transferred to the first thiolation domain of the nonribosomal peptide synthetase gloA/GLNRPS4 by the acyl-AMP ligase gloD/GLligase, followed by its acylation to L-ornithine to trigger elongation of the cyclic hexapeptide. L-ornithine, 4R-hydroxyl-L-proline (generated from L-proline by the dioxygenase gloF/GLOXY2), 3S-hydroxyl-L-homotyrosine (generated by gloG/GLHtyB, gloH/GLHtyA, gloI/GLHtyC, gloJ/GLHtyD and hydroxylated at C-3 by the dioxygenase gloM/GLOXY1), 3R-hydroxyl-L-glutamine (generated from L-glutamine probably by the dioxygenase gloE/GLOXY3) and 3S-hydroxyl-L-proline (generated from L-proline by the dioxygenase gloF/GLOXY2 to yield pneumocandin B0), or 3S-hydroxyl-4S-methyl-L-proline (generated from L-leucine by the dioxygenase gloC/GLOXY4 to yield pneumocandin A0) are sequentially added to the growing chain. The last C domain of gloA/GLNRPS4 is proposed to be responsible for cyclization by condensation to form the peptide bond between L-ornithine and 3S-hydroxyl-4S-methyl-L-proline (for pneumocandin A0) or 3S-hydroxyl-L-proline (for pneumocandin B0). Finally, the subsequent C-4 hydroxylation of 3S-hydroxyl-L-homotyrosine and L-ornithine dihydroxylation at C-4 and C-5 are performed by the cytochrome P450 monooxygenases gloP/GLP450-1 and gloO/GLP450-2, respectively. The protein is Pneumocandin biosynthesis cluster protein B of Glarea lozoyensis (strain ATCC 20868 / MF5171).